A 770-amino-acid chain; its full sequence is Potassium transporter 25 (770 aa).

Over 1–23 the chain is Cytoplasmic; sequence MDLEAAHGAAAAPGKRRRRARES. A helical membrane pass occupies residues 24–44; sequence WGASLLLAYQSLGVVYGDVAT. Residues 45-70 are Extracellular-facing; that stretch reads SPLYVYKSAFAGDDIQHSAGNEEIYG. The chain crosses the membrane as a helical span at residues 71–91; sequence VLSFVFWTLTLISLVKYVLIV. Residues 92-152 lie on the Cytoplasmic side of the membrane; it reads LRADDGGEGG…MLERYRVLQR (61 aa). The chain crosses the membrane as a helical span at residues 153 to 173; that stretch reads LLLLFALLGTCMVIGDGVLTP. The Extracellular portion of the chain corresponds to 174-194; that stretch reads AVSVYSAVSGLELSMEHEHHK. A helical membrane pass occupies residues 195–215; sequence YVQLPVTCAILIGLFALQHYG. Topologically, residues 216–218 are cytoplasmic; that stretch reads THR. The chain crosses the membrane as a helical span at residues 219 to 239; the sequence is VGFIFAPIVCVWLLCISAIGV. The Extracellular segment spans residues 240–267; the sequence is YNIVHWNHHVYRALSPYYMYQFLKKTQT. The helical transmembrane segment at 268–288 threads the bilayer; that stretch reads GGWMSLGGILLCVTGSEAMYA. At 289–299 the chain is on the cytoplasmic side; sequence DLGHFSQSSIK. Residues 300 to 320 form a helical membrane-spanning segment; that stretch reads IAFMSVVYPALVLAYMGQAAY. Topologically, residues 321–346 are extracellular; that stretch reads ISQHHSFENAYHIGFYVSVPEKLRWP. Residues 347 to 367 form a helical membrane-spanning segment; sequence VLVIAILAAVVGSQAVITGTF. The Cytoplasmic portion of the chain corresponds to 368–394; sequence SIIKQCSSLSCFPGVKIVHTSSTVHGQ. A helical transmembrane segment spans residues 395-415; sequence IYIPEINWILMILCLAVTLGF. Residues 416 to 425 are Extracellular-facing; it reads RNTKHLANAQ. Residues 426 to 446 traverse the membrane as a helical segment; that stretch reads GLAVITVMLVTTCLMSLVIVL. Residues 447 to 451 lie on the Cytoplasmic side of the membrane; that stretch reads CWNKS. A helical transmembrane segment spans residues 452-472; that stretch reads IFLALGFLIFFGTIEVLYFSA. Residues 473–479 lie on the Extracellular side of the membrane; that stretch reads SLVKFHE. The chain crosses the membrane as a helical span at residues 480-500; sequence GAWVPITLSFIFMIVMCVWHY. Residues 501 to 770 are Cytoplasmic-facing; sequence GTIKKYEFDF…TLEVGMVYQV (270 aa).

The protein belongs to the HAK/KUP transporter (TC 2.A.72.3) family.

It localises to the membrane. High-affinity potassium transporter. The protein is Potassium transporter 25 (HAK25) of Oryza sativa subsp. japonica (Rice).